The chain runs to 411 residues: Efflux pump periplasmic linker BepF (411 aa).

The stretch at 118-196 forms a coiled coil; it reads FVLQKDALQA…SLEQAQINLG (79 aa).

Belongs to the membrane fusion protein (MFP) (TC 8.A.1) family. As to quaternary structure, probably part of a tripartite efflux pump, which is composed of an outer membrane efflux protein, an inner membrane protein and a protein that expands the periplasmic space. Could form a tripartite pump with BepC and BepG.

The protein localises to the periplasm. Its function is as follows. May contribute to resistance to some drugs, such as deoxycholate, sodium dodecyl sulfate and nalidixic acid, in the absence of BepD and BepE. The sequence is that of Efflux pump periplasmic linker BepF (bepF) from Brucella suis biovar 1 (strain 1330).